Here is a 1342-residue protein sequence, read N- to C-terminus: DNA-directed RNA polymerase subunit beta (1342 aa).

The protein belongs to the RNA polymerase beta chain family. As to quaternary structure, the RNAP catalytic core consists of 2 alpha, 1 beta, 1 beta' and 1 omega subunit. When a sigma factor is associated with the core the holoenzyme is formed, which can initiate transcription.

The enzyme catalyses RNA(n) + a ribonucleoside 5'-triphosphate = RNA(n+1) + diphosphate. Functionally, DNA-dependent RNA polymerase catalyzes the transcription of DNA into RNA using the four ribonucleoside triphosphates as substrates. The sequence is that of DNA-directed RNA polymerase subunit beta from Pseudoalteromonas atlantica (strain T6c / ATCC BAA-1087).